Reading from the N-terminus, the 189-residue chain is Interferon alpha-7 (189 aa).

A signal peptide spans 1 to 23 (MARSFSLLMVVLVLSYKSICSLG). 2 disulfide bridges follow: Cys24–Cys122 and Cys52–Cys162.

The protein belongs to the alpha/beta interferon family.

The protein localises to the secreted. In terms of biological role, produced by macrophages, IFN-alpha have antiviral activities. Interferon stimulates the production of two enzymes: a protein kinase and an oligoadenylate synthetase. The chain is Interferon alpha-7 (IFNA7) from Homo sapiens (Human).